The chain runs to 383 residues: Lipid-A-disaccharide synthase (383 aa).

Belongs to the LpxB family.

It carries out the reaction 2-N,3-O-bis[(3R)-3-hydroxytetradecanoyl]-alpha-D-glucosaminyl 1-phosphate + UDP-2-N,3-O-bis[(3R)-3-hydroxytetradecanoyl]-alpha-D-glucosamine = lipid A disaccharide (E. coli) + UDP + H(+). The catalysed reaction is a lipid X + a UDP-2-N,3-O-bis[(3R)-3-hydroxyacyl]-alpha-D-glucosamine = a lipid A disaccharide + UDP + H(+). Its pathway is glycolipid biosynthesis; lipid IV(A) biosynthesis; lipid IV(A) from (3R)-3-hydroxytetradecanoyl-[acyl-carrier-protein] and UDP-N-acetyl-alpha-D-glucosamine: step 5/6. Its function is as follows. Condensation of UDP-2,3-diacylglucosamine and 2,3-diacylglucosamine-1-phosphate to form lipid A disaccharide, a precursor of lipid A, a phosphorylated glycolipid that anchors the lipopolysaccharide to the outer membrane of the cell. This chain is Lipid-A-disaccharide synthase, found in Klebsiella pneumoniae subsp. pneumoniae (strain ATCC 700721 / MGH 78578).